A 97-amino-acid chain; its full sequence is MRTGGLREMSQTNEYEVFQKEIKEIKADQKTLEKRVSTLERTSERHDQQIISINEKLNKIEENTTWIKRSITGAIITAVSTGIIGGAIAVFYNLLQK.

This sequence to B.licheniformis xpaL1 and to B.subtilis XhlA.

This is an uncharacterized protein from Bacillus licheniformis.